We begin with the raw amino-acid sequence, 374 residues long: Dual-specificity RNA methyltransferase RlmN (374 aa).

Residue E94 is the Proton acceptor of the active site. The Radical SAM core domain maps to 100-339 (EEDRATLCVS…VTIRKTRGDD (240 aa)). The cysteines at positions 107 and 344 are disulfide-linked. Residues C114, C118, and C121 each contribute to the [4Fe-4S] cluster site. S-adenosyl-L-methionine-binding positions include 168-169 (GE), S200, 222-224 (SLH), and N301. Catalysis depends on C344, which acts as the S-methylcysteine intermediate.

Belongs to the radical SAM superfamily. RlmN family. It depends on [4Fe-4S] cluster as a cofactor.

It localises to the cytoplasm. It catalyses the reaction adenosine(2503) in 23S rRNA + 2 reduced [2Fe-2S]-[ferredoxin] + 2 S-adenosyl-L-methionine = 2-methyladenosine(2503) in 23S rRNA + 5'-deoxyadenosine + L-methionine + 2 oxidized [2Fe-2S]-[ferredoxin] + S-adenosyl-L-homocysteine. It carries out the reaction adenosine(37) in tRNA + 2 reduced [2Fe-2S]-[ferredoxin] + 2 S-adenosyl-L-methionine = 2-methyladenosine(37) in tRNA + 5'-deoxyadenosine + L-methionine + 2 oxidized [2Fe-2S]-[ferredoxin] + S-adenosyl-L-homocysteine. Functionally, specifically methylates position 2 of adenine 2503 in 23S rRNA and position 2 of adenine 37 in tRNAs. m2A2503 modification seems to play a crucial role in the proofreading step occurring at the peptidyl transferase center and thus would serve to optimize ribosomal fidelity. This Vibrio vulnificus (strain YJ016) protein is Dual-specificity RNA methyltransferase RlmN.